The following is a 27-amino-acid chain: uncharacterized protein (27 aa).

The protein localises to the plastid. It localises to the cyanelle. This is an uncharacterized protein from Cyanophora paradoxa.